The primary structure comprises 155 residues: MGTRGPIGKRDEERVRRNTPDSPTDTIQMPGLVTIPEMGDLSHDGRTHQLVKDMYESIKQSAAVKYYEPTDWQMARLALYTLNQELIAAENNGKPVGAMKLTAINQMLSALLLTEGDRRRVRLEVERAPADPTGGKVVDVTDVLKQRLAKASGGS.

The tract at residues 1-26 (MGTRGPIGKRDEERVRRNTPDSPTDT) is disordered. Over residues 8 to 19 (GKRDEERVRRNT) the composition is skewed to basic and acidic residues.

This Mycobacterium phage L5 (Mycobacteriophage L5) protein is Gene 5 protein (5).